A 644-amino-acid chain; its full sequence is Exoribonuclease 2 (644 aa).

The region spanning 189–516 (REDLTALNFV…NHRLLKAIIT (328 aa)) is the RNB domain. An S1 motif domain is found at 561–643 (DTRFTAEIID…ETRNVIARPV (83 aa)).

Belongs to the RNR ribonuclease family. RNase II subfamily.

Its subcellular location is the cytoplasm. The catalysed reaction is Exonucleolytic cleavage in the 3'- to 5'-direction to yield nucleoside 5'-phosphates.. Functionally, involved in mRNA degradation. Hydrolyzes single-stranded polyribonucleotides processively in the 3' to 5' direction. The sequence is that of Exoribonuclease 2 from Yersinia pseudotuberculosis serotype O:3 (strain YPIII).